Reading from the N-terminus, the 2090-residue chain is Dysferlin (2090 aa).

The region spanning 1–101 is the C2 1 domain; that stretch reads MLRVFILFAE…LATPSLSASF (101 aa). Topologically, residues 1 to 2056 are cytoplasmic; the sequence is MLRVFILFAE…FILWRRFRCA (2056 aa). D18, I19, D21, and N40 together coordinate Ca(2+). Residues 130-217 form a disordered region; it reads VPLFPPPASL…SAPPRKLLSD (88 aa). The span at 155–172 shows a compositional bias: acidic residues; sequence GGEEDTEDQGLTGDEAEP. G164 carries the post-translational modification Phosphoserine. T166 is subject to Phosphothreonine. Position 167 is a phosphoserine (G167). Positions 188-199 are enriched in pro residues; that stretch reads PRKPPSHPPPHY. C2 domains are found at residues 206-323, 362-498, 1146-1272, 1320-1448, 1571-1689, and 1805-1953; these read RSSA…RKWL, DKED…EEEP, GVNR…PLTR, PPPQ…AESP, PMPP…ARCG, and GRPG…EKCS. A209 carries the phosphoserine modification. At P219 the chain carries Phosphothreonine. 9 residues coordinate Ca(2+): D411, D419, D467, D469, D475, D1178, D1184, D1240, and D1242. The Ca(2+) site is built by D1604, D1610, D1659, D1661, D1924, S1927, and D1930. The tract at residues 2005–2027 is disordered; sequence SEHEERPAGQGRDEPNMNPKLED. A helical membrane pass occupies residues 2057-2077; the sequence is IILFIILFILLLFLGVFVYAF. Over 2078 to 2090 the chain is Extracellular; that stretch reads PNYAAMKLVKPFR.

It belongs to the ferlin family. As to quaternary structure, interacts with CAV3. Interacts with AHNAK; the interaction is direct and Ca(2+)-independent. Interacts with AHNAK2; the interaction is direct and Ca(2+)-independent. Interacts with ANXA1; the interaction is Ca(2+)- and injury state-dependent. Interacts with ANXA2; the interaction is Ca(2+)- and injury state-dependent. Interacts with CACNA1S and PARVB. Interacts with TRIM72/MG53; interaction is required for transport to sites of cell injury during repair patch formation. Interacts with RIPOR2; this interaction occurs during early myogenic differentiation. It depends on Ca(2+) as a cofactor. Expressed in skeletal and cardiac muscles (at protein level). Expressed in skeletal muscle and heart. Also found in brain, liver and kidney.

The protein localises to the cell membrane. It is found in the sarcolemma. Its subcellular location is the cytoplasmic vesicle membrane. Key calcium ion sensor involved in the Ca(2+)-triggered synaptic vesicle-plasma membrane fusion. Plays a role in the sarcolemma repair mechanism of both skeletal muscle and cardiomyocytes that permits rapid resealing of membranes disrupted by mechanical stress. The sequence is that of Dysferlin (Dysf) from Mus musculus (Mouse).